The chain runs to 358 residues: Chondroadherin (358 aa).

The N-terminal stretch at 1-20 (MARALLFSLVFLAILLPALA) is a signal peptide. The LRRNT domain maps to 21-50 (ACPQNCHCHGDLQHVICDKVGLQKIPKVSE). An intrachain disulfide couples C22 to C37. LRR repeat units lie at residues 51 to 72 (TTKL…SFRT), 75 to 96 (NLVS…AFRG), 99 to 120 (QLIY…AFDD), 123 to 144 (ELTY…LLSP), 147 to 168 (NLFI…AFQG), 171 to 192 (DLRW…SLDD), 195 to 216 (NLAK…ALSK), 219 to 240 (VVEE…AFQS), 244 to 265 (YLET…AFSG), and 268 to 289 (TLKH…FPFD). O-linked (GalNAc...) serine glycosylation occurs at S143. Residues 299–347 (NPWKCTCQLRGLRRWLEAKASRPDATCSSPAKFKGQRIRDTDALRSCKS) form the LRRCT domain. Cystine bridges form between C303–C345 and C305–C325. The disordered stretch occupies residues 322 to 358 (DATCSSPAKFKGQRIRDTDALRSCKSPTKRSKKAGRH). Over residues 348-358 (PTKRSKKAGRH) the composition is skewed to basic residues.

This sequence belongs to the small leucine-rich proteoglycan (SLRP) family. SLRP class IV subfamily. In terms of assembly, mostly monomeric. Interacts with collagen type II. Cartilage.

The protein resides in the secreted. The protein localises to the extracellular space. It localises to the extracellular matrix. Promotes attachment of chondrocytes, fibroblasts, and osteoblasts. This binding is mediated (at least for chondrocytes and fibroblasts) by the integrin alpha(2)beta(1). May play an important role in the regulation of chondrocyte growth and proliferation. The polypeptide is Chondroadherin (Chad) (Mus musculus (Mouse)).